The following is a 145-amino-acid chain: Glutaconyl-CoA decarboxylase subunit gamma (145 aa).

The segment at 52–82 is disordered; that stretch reads APAPAAAPAAAPAPAAKPAAAAPAGSVTVSA. Low complexity predominate over residues 57–75; that stretch reads AAPAAAPAPAAKPAAAAPA. In terms of domain architecture, Biotinyl-binding spans 77–145; that stretch reads SVTVSAPMPG…VATGDVMVIL (69 aa). The residue at position 112 (lysine 112) is an N6-biotinyllysine.

Heterooctamer consisting of two alpha, two beta, two gamma and two delta subunits. Biotin is required as a cofactor.

The catalysed reaction is (2E)-glutaconyl-CoA + Na(+)(in) + H(+) = (2E)-butenoyl-CoA + Na(+)(out) + CO2. Its pathway is amino-acid degradation; L-glutamate degradation via hydroxyglutarate pathway; crotonoyl-CoA from L-glutamate: step 5/5. Biotin carrier subunit of the primary sodium pump glutaconyl-CoA decarboxylase (GCD). In Acidaminococcus fermentans (strain ATCC 25085 / DSM 20731 / CCUG 9996 / CIP 106432 / VR4), this protein is Glutaconyl-CoA decarboxylase subunit gamma (gcdC).